We begin with the raw amino-acid sequence, 1554 residues long: Myosin-2 (1554 aa).

The 54-residue stretch at Glu4–Asp57 folds into the Myosin N-terminal SH3-like domain. In terms of domain architecture, Myosin motor spans Glu70–Ser774. Gly164–Thr171 provides a ligand contact to ATP. Residues Phe443–Glu523 are actin-binding. IQ domains are found at residues His778–Leu798, Ile800–Phe824, Lys825–Ser847, Leu848–Arg872, Gln873–Thr895, and Thr896–Ser925. Positions Val926–Ser1079 form a coiled coil. The segment at Gly1080–Glu1554 is non alpha-helical, tail domain. Low complexity predominate over residues Thr1082 to Ser1093. Positions Thr1082–Arg1109 are disordered. The segment covering Ala1098–Arg1109 has biased composition (polar residues). Residues Ala1205–Lys1480 form the Dilute domain.

Belongs to the TRAFAC class myosin-kinesin ATPase superfamily. Myosin family. As to quaternary structure, homodimer. Interacts with calmodulin (CMD1) and the myosin light chain MLC1 through its IQ repeats.

Functionally, myosin heavy chain that is required for the cell cycle-regulated transport of various organelles and proteins for their segregation. Functions by binding with its tail domain to receptor proteins on organelles and exerting force with its N-terminal motor domain against actin filaments, thereby transporting its cargo along polarized actin cables. This Lachancea kluyveri (strain ATCC 58438 / CBS 3082 / BCRC 21498 / NBRC 1685 / JCM 7257 / NCYC 543 / NRRL Y-12651) (Yeast) protein is Myosin-2 (MYO2).